Reading from the N-terminus, the 99-residue chain is Large ribosomal subunit protein uL23 (99 aa).

This sequence belongs to the universal ribosomal protein uL23 family. In terms of assembly, part of the 50S ribosomal subunit. Contacts protein L29, and trigger factor when it is bound to the ribosome.

In terms of biological role, one of the early assembly proteins it binds 23S rRNA. One of the proteins that surrounds the polypeptide exit tunnel on the outside of the ribosome. Forms the main docking site for trigger factor binding to the ribosome. The sequence is that of Large ribosomal subunit protein uL23 from Leifsonia xyli subsp. xyli (strain CTCB07).